A 396-amino-acid chain; its full sequence is Elongation factor Tu 2 (396 aa).

The tr-type G domain occupies 10–206 (KPHCNVGTIG…AVDDYIPQPE (197 aa)). The G1 stretch occupies residues 19-26 (GHVDHGKT). 19–26 (GHVDHGKT) lines the GTP pocket. Thr-26 is a binding site for Mg(2+). The segment at 60-64 (GITIS) is G2. The G3 stretch occupies residues 81–84 (DCPG). Residues 81–85 (DCPGH) and 136–139 (NKCD) contribute to the GTP site. The interval 136 to 139 (NKCD) is G4. A G5 region spans residues 174–176 (SAL).

This sequence belongs to the TRAFAC class translation factor GTPase superfamily. Classic translation factor GTPase family. EF-Tu/EF-1A subfamily. Monomer.

The protein localises to the cytoplasm. The enzyme catalyses GTP + H2O = GDP + phosphate + H(+). In terms of biological role, GTP hydrolase that promotes the GTP-dependent binding of aminoacyl-tRNA to the A-site of ribosomes during protein biosynthesis. This Rhodospirillum rubrum (strain ATCC 11170 / ATH 1.1.1 / DSM 467 / LMG 4362 / NCIMB 8255 / S1) protein is Elongation factor Tu 2.